Here is a 406-residue protein sequence, read N- to C-terminus: Succinylornithine transaminase (406 aa).

At Lys252 the chain carries N6-(pyridoxal phosphate)lysine.

It belongs to the class-III pyridoxal-phosphate-dependent aminotransferase family. AstC subfamily. Requires pyridoxal 5'-phosphate as cofactor.

It catalyses the reaction N(2)-succinyl-L-ornithine + 2-oxoglutarate = N-succinyl-L-glutamate 5-semialdehyde + L-glutamate. The protein operates within amino-acid degradation; L-arginine degradation via AST pathway; L-glutamate and succinate from L-arginine: step 3/5. In terms of biological role, catalyzes the transamination of N(2)-succinylornithine and alpha-ketoglutarate into N(2)-succinylglutamate semialdehyde and glutamate. Can also act as an acetylornithine aminotransferase. In Escherichia coli O139:H28 (strain E24377A / ETEC), this protein is Succinylornithine transaminase.